A 434-amino-acid polypeptide reads, in one-letter code: Serine hydroxymethyltransferase (434 aa).

(6S)-5,6,7,8-tetrahydrofolate-binding positions include Leu-132 and 136–138 (GHL). Residue Lys-241 is modified to N6-(pyridoxal phosphate)lysine.

The protein belongs to the SHMT family. In terms of assembly, homodimer. The cofactor is pyridoxal 5'-phosphate.

It is found in the cytoplasm. The enzyme catalyses (6R)-5,10-methylene-5,6,7,8-tetrahydrofolate + glycine + H2O = (6S)-5,6,7,8-tetrahydrofolate + L-serine. Its pathway is one-carbon metabolism; tetrahydrofolate interconversion. The protein operates within amino-acid biosynthesis; glycine biosynthesis; glycine from L-serine: step 1/1. In terms of biological role, catalyzes the reversible interconversion of serine and glycine with tetrahydrofolate (THF) serving as the one-carbon carrier. This reaction serves as the major source of one-carbon groups required for the biosynthesis of purines, thymidylate, methionine, and other important biomolecules. Also exhibits THF-independent aldolase activity toward beta-hydroxyamino acids, producing glycine and aldehydes, via a retro-aldol mechanism. The protein is Serine hydroxymethyltransferase of Kineococcus radiotolerans (strain ATCC BAA-149 / DSM 14245 / SRS30216).